The primary structure comprises 156 residues: Large ribosomal subunit protein uL15 (156 aa).

Positions 25-49 (RGIGCGKGKTSGRGHKGQKARSGTS) are disordered. The span at 34-43 (TSGRGHKGQK) shows a compositional bias: basic residues.

It belongs to the universal ribosomal protein uL15 family. As to quaternary structure, part of the 50S ribosomal subunit.

Its function is as follows. Binds to the 23S rRNA. This chain is Large ribosomal subunit protein uL15, found in Wolbachia sp. subsp. Brugia malayi (strain TRS).